The sequence spans 64 residues: Translation machinery-associated protein 7 homolog (64 aa).

The interval 1–64 (MSGREGGKKK…QGGIKKSGKK (64 aa)) is disordered. Residues 21–50 (EMDEDTAAFKAKQKEQQKALEAAKQKATKG) are a coiled coil. The segment covering 32-44 (KQKEQQKALEAAK) has biased composition (basic and acidic residues).

This sequence belongs to the TMA7 family.

This Anopheles gambiae (African malaria mosquito) protein is Translation machinery-associated protein 7 homolog.